The chain runs to 358 residues: Aminomethyltransferase (358 aa).

Belongs to the GcvT family. As to quaternary structure, the glycine cleavage system is composed of four proteins: P, T, L and H.

The catalysed reaction is N(6)-[(R)-S(8)-aminomethyldihydrolipoyl]-L-lysyl-[protein] + (6S)-5,6,7,8-tetrahydrofolate = N(6)-[(R)-dihydrolipoyl]-L-lysyl-[protein] + (6R)-5,10-methylene-5,6,7,8-tetrahydrofolate + NH4(+). Functionally, the glycine cleavage system catalyzes the degradation of glycine. This chain is Aminomethyltransferase, found in Francisella philomiragia subsp. philomiragia (strain ATCC 25017 / CCUG 19701 / FSC 153 / O#319-036).